We begin with the raw amino-acid sequence, 359 residues long: S-adenosylmethionine-dependent nucleotide dehydratase RSAD2 (359 aa).

The interval 43–67 (QTPARKISRPESRTSKQKEGSRAPF) is disordered. The segment covering 50–63 (SRPESRTSKQKEGS) has biased composition (basic and acidic residues). The Radical SAM core domain maps to 67 to 287 (FTTPSSVNYH…LERHQSIQCL (221 aa)). [4Fe-4S] cluster contacts are provided by cysteine 81, cysteine 85, and cysteine 88.

It belongs to the radical SAM superfamily. RSAD2 family. Requires [4Fe-4S] cluster as cofactor.

The protein localises to the endoplasmic reticulum membrane. In terms of biological role, interferon-inducible iron-sulfur (4FE-4S) cluster-binding antiviral protein which plays a major role in the cell antiviral state induced by type I and type II interferon. This is S-adenosylmethionine-dependent nucleotide dehydratase RSAD2 from Danio rerio (Zebrafish).